A 198-amino-acid chain; its full sequence is Ribonuclease HII (198 aa).

Residues 10-198 (QLVAGVDEVG…PVKRALGLAS (189 aa)) enclose the RNase H type-2 domain. Asp16, Glu17, and Asp108 together coordinate a divalent metal cation.

The protein belongs to the RNase HII family. Requires Mn(2+) as cofactor. The cofactor is Mg(2+).

It is found in the cytoplasm. It carries out the reaction Endonucleolytic cleavage to 5'-phosphomonoester.. In terms of biological role, endonuclease that specifically degrades the RNA of RNA-DNA hybrids. This is Ribonuclease HII from Shigella boydii serotype 4 (strain Sb227).